We begin with the raw amino-acid sequence, 560 residues long: Proteasome-associated ATPase (560 aa).

Basic and acidic residues predominate over residues 1 to 19; the sequence is MSQQHDDRRPPDTADRDLA. Residues 1–21 are disordered; the sequence is MSQQHDDRRPPDTADRDLARQ. Residues 16 to 55 are a coiled coil; that stretch reads RDLARQATSLAEKNERLTAALTAARAQLVEMKAQLEEVSK. An ATP-binding site is contributed by 237 to 242; it reads GCGKTL. A docks into pockets in the proteasome alpha-ring region spans residues 559-560; sequence YL.

This sequence belongs to the AAA ATPase family. In terms of assembly, homohexamer. Assembles into a hexameric ring structure that caps the 20S proteasome core. Strongly interacts with the prokaryotic ubiquitin-like protein Pup through a hydrophobic interface; the interacting region of ARC lies in its N-terminal coiled-coil domain. There is one Pup binding site per ARC hexamer ring. Upon ATP-binding, the C-terminus of ARC interacts with the alpha-rings of the proteasome core, possibly by binding to the intersubunit pockets.

The protein operates within protein degradation; proteasomal Pup-dependent pathway. In terms of biological role, ATPase which is responsible for recognizing, binding, unfolding and translocation of pupylated proteins into the bacterial 20S proteasome core particle. May be essential for opening the gate of the 20S proteasome via an interaction with its C-terminus, thereby allowing substrate entry and access to the site of proteolysis. Thus, the C-termini of the proteasomal ATPase may function like a 'key in a lock' to induce gate opening and therefore regulate proteolysis. This Beutenbergia cavernae (strain ATCC BAA-8 / DSM 12333 / CCUG 43141 / JCM 11478 / NBRC 16432 / NCIMB 13614 / HKI 0122) protein is Proteasome-associated ATPase.